A 156-amino-acid polypeptide reads, in one-letter code: Small ribosomal subunit protein uS7 (156 aa).

It belongs to the universal ribosomal protein uS7 family. In terms of assembly, part of the 30S ribosomal subunit. Contacts proteins S9 and S11.

Its function is as follows. One of the primary rRNA binding proteins, it binds directly to 16S rRNA where it nucleates assembly of the head domain of the 30S subunit. Is located at the subunit interface close to the decoding center, probably blocks exit of the E-site tRNA. The protein is Small ribosomal subunit protein uS7 of Geobacter sp. (strain M21).